A 3401-amino-acid polypeptide reads, in one-letter code: Genome polyprotein (3401 aa).

Residues 1 to 104 are Cytoplasmic-facing; it reads MPVRPRNKPK…GRKKRRSMTH (104 aa). A propeptide spans 101-117 (ER anchor for the capsid protein C, removed in mature form by serine protease NS3); sequence SMTHGIILSLGVTMVIG. A helical membrane pass occupies residues 105–125; the sequence is GIILSLGVTMVIGASLHHHGG. At 126–240 the chain is on the extracellular side; that stretch reads RYLLNVTHAD…GERQIQRIER (115 aa). Residues asparagine 130 and asparagine 146 are each glycosylated (N-linked (GlcNAc...) asparagine; by host). The helical transmembrane segment at 241–261 threads the bilayer; the sequence is WMMRNPFYAAISLLLAWWVGS. Residues 262–266 are Cytoplasmic-facing; the sequence is DIKQK. The helical transmembrane segment at 267–281 threads the bilayer; it reads VLIAFLVLAIGPAYS. Topologically, residues 282–725 are extracellular; the sequence is THCVGIPKRD…HTVFGNVFHS (444 aa). Intrachain disulfides connect cysteine 284–cysteine 311, cysteine 355–cysteine 386, cysteine 373–cysteine 397, cysteine 462–cysteine 564, and cysteine 581–cysteine 611. The tract at residues 379–392 is fusion peptide; sequence DRGWGNGCGLFGKG. Residues 726-746 form a helical membrane-spanning segment; that stretch reads IFGGLSWITKIILGGMFLWLG. Residues 747–753 are Extracellular-facing; it reads VNSRNQT. A helical transmembrane segment spans residues 754 to 774; sequence MCMVLMAVGGILLFMTLGVSG. Residues 775–1122 lie on the Extracellular side of the membrane; that stretch reads EVGCSLDIKR…NVHEEHLVRS (348 aa). 6 disulfides stabilise this stretch: cysteine 778-cysteine 789, cysteine 829-cysteine 916, cysteine 952-cysteine 997, cysteine 1054-cysteine 1103, cysteine 1065-cysteine 1087, and cysteine 1086-cysteine 1090. 2 N-linked (GlcNAc...) asparagine; by host glycosylation sites follow: asparagine 904 and asparagine 981. A helical membrane pass occupies residues 1123–1143; that stretch reads WASAGTGMAESSLGLVALFLF. At 1144–1198 the chain is on the cytoplasmic side; the sequence is TDIFARKRMTRKFMVIGCLGVLSVMIVGGFTALDLIRYIIVVGQHFASMNHGGDV. Residues 1199–1219 traverse the membrane as a helical segment; that stretch reads AYLAIIAVGKLRPGLLMMYSF. Residues 1220 to 1287 are Lumenal-facing; sequence KAAWSPKERV…PILALLTPLS (68 aa). The helical transmembrane segment at 1288-1308 threads the bilayer; the sequence is MEIIRKTGIFACVGLLGLSLW. Residues 1309–1352 are Cytoplasmic-facing; the sequence is RGGDTTMRKGMPLLAGAATAASGLTRASLSVVFILCATAASRRS. Residues 1353 to 1373 form a helical membrane-spanning segment; the sequence is WPIGEIMAIVGIVGTGFGMAV. The Lumenal portion of the chain corresponds to 1374–1376; that stretch reads NDQ. The chain crosses the membrane as a helical span at residues 1377-1397; that stretch reads ASLAGPMLVFGLIMIVYATLG. Residues 1398–1447 are Cytoplasmic-facing; sequence RADGLTLKRVGDITWEEEAVHSGSSTRYDVTLNEAGEFKLVHEEPVVWSH. Positions 1404 to 1443 are interacts with and activates NS3 protease; sequence LKRVGDITWEEEAVHSGSSTRYDVTLNEAGEFKLVHEEPV. An intramembrane region (helical) is located at residues 1448–1468; it reads VVFLVVALIAASVHPIALVVV. The Cytoplasmic segment spans residues 1469–2154; it reads TIIWTYGKKH…ASTNAPEAVT (686 aa). In terms of domain architecture, Peptidase S7 spans 1481–1661; the sequence is GGVLWDIPIA…GGEGVTEEPL (181 aa). Active-site charge relay system; for serine protease NS3 activity residues include histidine 1532, aspartate 1556, and serine 1617. One can recognise a Helicase ATP-binding domain in the interval 1665 to 1821; sequence ATMLRKGKLT…ESNGEIEDLR (157 aa). Positions 1669–1672 are important for RNA-binding; the sequence is RKGK. 1678–1685 serves as a coordination point for ATP; that stretch reads YHPGAGKT. The DEAH box signature appears at 1769-1772; it reads DEAH. A Helicase C-terminal domain is found at 1816-1995; it reads EIEDLRRDIP…GMVAPLYDVE (180 aa). The chain crosses the membrane as a helical span at residues 2155–2175; it reads ILLMTGIVVACTLGVGLAFMW. Topologically, residues 2176–2181 are lumenal; it reads PKGVDK. The helical intramembrane region spans 2182–2200; sequence MSMGMITMSIAGYLMLQGG. Position 2201 (leucine 2201) is a topological domain, lumenal. A helical membrane pass occupies residues 2202-2222; it reads TPVQVASVLLIFFIFMVVLIP. At 2223-2235 the chain is on the cytoplasmic side; it reads EAGTQRSINDNKT. The chain crosses the membrane as a helical span at residues 2236–2250; the sequence is LYVLLGVALLIGAIT. Topologically, residues 2251–2285 are cytoplasmic; the sequence is ANEMGYLEKTKRDLLGERVQNEWKLELPMFDLRPG. Residues 2286-2306 constitute an intramembrane region (helical); the sequence is AAWSIYVGLATLVMPVLDHWI. Topologically, residues 2307–2354 are lumenal; that stretch reads RTEYGSLSLTGIAQQASILQAMDKGVPFFKLNMSVIVLLVSVWNNFSM. The chain crosses the membrane as a helical span at residues 2355–2375; the sequence is LSVLCGVGLLGVHCAFVLPGL. The Cytoplasmic portion of the chain corresponds to 2376 to 2418; it reads RAQAAKQAQRRVYHGVAKNPVVDGQTTAEIETAPEMPPLYEKK. Residues 2419–2439 traverse the membrane as a helical segment; that stretch reads LALVLLGVVAIANGVMVRSAF. Residues 2440–2467 are Lumenal-facing; that stretch reads SMAETVVLLSAAVGPLLEGNTSAIWNGP. The chain crosses the membrane as a helical span at residues 2468 to 2488; that stretch reads MAVAMAGIMRGNYYAGIGLAY. Topologically, residues 2489-3401 are cytoplasmic; sequence NLWILQSPKR…YSVQEVGTVL (913 aa). Residues 2499–2763 form the mRNA cap 0-1 NS5-type MT domain; sequence GRSTTMTLGE…DVVFPTGTRN (265 aa). Position 2554 (serine 2554) interacts with S-adenosyl-L-methionine. At serine 2554 the chain carries Phosphoserine. The For 2'-O-MTase activity role is filled by lysine 2559. Residues glycine 2584, tryptophan 2585, threonine 2602, leucine 2603, aspartate 2629, and valine 2630 each contribute to the S-adenosyl-L-methionine site. Aspartate 2644 serves as the catalytic For 2'-O-MTase activity. Residue isoleucine 2645 coordinates S-adenosyl-L-methionine. Residues lysine 2680 and glutamate 2716 each act as for 2'-O-MTase activity in the active site. Tyrosine 2718 serves as a coordination point for S-adenosyl-L-methionine. The Nuclear localization signal motif lies at 2869-2902; sequence RAIMEVVNKWMFDFLAREKAPRICTKEEFINKVR. Zn(2+) is bound by residues glutamate 2936, histidine 2940, cysteine 2945, and cysteine 2948. The region spanning 3026-3178 is the RdRp catalytic domain; that stretch reads GIMYADDTAG…APLDERFGLA (153 aa). Histidine 3213, cysteine 3229, and cysteine 3348 together coordinate Zn(2+).

The protein in the N-terminal section; belongs to the class I-like SAM-binding methyltransferase superfamily. mRNA cap 0-1 NS5-type methyltransferase family. In terms of assembly, homodimer. Interacts (via N-terminus) with host EXOC1 (via C-terminus); this interaction results in EXOC1 degradation through the proteasome degradation pathway. Forms heterodimers with envelope protein E in the endoplasmic reticulum and Golgi. As to quaternary structure, homodimer; in the endoplasmic reticulum and Golgi. Interacts with protein prM. Interacts with non-structural protein 1. In terms of assembly, homodimer; Homohexamer when secreted. Interacts with envelope protein E. NS1 interacts with NS4B. Interacts with host complement protein CFH; this interaction leads to the degradation of C3. Interacts (via N-terminus) with serine protease NS3. As to quaternary structure, forms a heterodimer with serine protease NS3. May form homooligomers. In terms of assembly, forms a heterodimer with NS2B. Interacts with non-structural protein 2A (via N-terminus). Interacts with NS4B. Interacts with unphosphorylated RNA-directed RNA polymerase NS5; this interaction stimulates RNA-directed RNA polymerase NS5 guanylyltransferase activity. NS3 interacts with host PDCD6IP; this interaction contributes to virion release. Interacts with serine protease NS3. As to quaternary structure, homodimer. Interacts with host STAT2; this interaction prevents the establishment of cellular antiviral state. Interacts with serine protease NS3. Interacts with host TRIM23; this interaction leads to NS5 ubiquitination. In terms of processing, specific enzymatic cleavages in vivo yield mature proteins. The nascent capsid protein C contains a C-terminal hydrophobic domain that act as a signal sequence for translocation of prM into the lumen of the ER. Mature capsid protein C is cleaved at a site upstream of this hydrophobic domain by NS3. prM is cleaved in post-Golgi vesicles by a host furin, releasing the mature small envelope protein M, and peptide pr. Non-structural protein 2A-alpha, a C-terminally truncated form of non-structural protein 2A, results from partial cleavage by NS3. Specific enzymatic cleavages in vivo yield mature proteins peptide 2K acts as a signal sequence and is removed from the N-terminus of NS4B by the host signal peptidase in the ER lumen. Signal cleavage at the 2K-4B site requires a prior NS3 protease-mediated cleavage at the 4A-2K site. Post-translationally, cleaved in post-Golgi vesicles by a host furin, releasing the mature small envelope protein M, and peptide pr. This cleavage is incomplete as up to 30% of viral particles still carry uncleaved prM. N-glycosylated. In terms of processing, N-glycosylated. The excreted form is glycosylated and this is required for efficient secretion of the protein from infected cells. Post-translationally, polyubiquitinated; ubiquitination is probably mediated by host TRIM23 and is prerequisite for NS5-STAT2 interaction. NS5 is not ISGylated or sumoylated. Phosphorylated on serines residues. This phosphorylation may trigger NS5 nuclear localization.

Its subcellular location is the virion. It is found in the host nucleus. The protein resides in the host cytoplasm. It localises to the host perinuclear region. The protein localises to the virion membrane. Its subcellular location is the host endoplasmic reticulum membrane. It is found in the secreted. It carries out the reaction Selective hydrolysis of -Xaa-Xaa-|-Yaa- bonds in which each of the Xaa can be either Arg or Lys and Yaa can be either Ser or Ala.. The catalysed reaction is RNA(n) + a ribonucleoside 5'-triphosphate = RNA(n+1) + diphosphate. It catalyses the reaction a ribonucleoside 5'-triphosphate + H2O = a ribonucleoside 5'-diphosphate + phosphate + H(+). The enzyme catalyses ATP + H2O = ADP + phosphate + H(+). It carries out the reaction a 5'-end (5'-triphosphoguanosine)-ribonucleoside in mRNA + S-adenosyl-L-methionine = a 5'-end (N(7)-methyl 5'-triphosphoguanosine)-ribonucleoside in mRNA + S-adenosyl-L-homocysteine. The catalysed reaction is a 5'-end (N(7)-methyl 5'-triphosphoguanosine)-ribonucleoside in mRNA + S-adenosyl-L-methionine = a 5'-end (N(7)-methyl 5'-triphosphoguanosine)-(2'-O-methyl-ribonucleoside) in mRNA + S-adenosyl-L-homocysteine + H(+). Its function is as follows. Plays a role in virus budding by binding to the cell membrane and gathering the viral RNA into a nucleocapsid that forms the core of a mature virus particle. During virus entry, may induce genome penetration into the host cytoplasm after hemifusion induced by the surface proteins. Can migrate to the cell nucleus where it modulates host functions. Inhibits RNA silencing by interfering with host Dicer. In terms of biological role, prevents premature fusion activity of envelope proteins in trans-Golgi by binding to envelope protein E at pH6.0. After virion release in extracellular space, gets dissociated from E dimers. Functionally, acts as a chaperone for envelope protein E during intracellular virion assembly by masking and inactivating envelope protein E fusion peptide. prM is the only viral peptide matured by host furin in the trans-Golgi network probably to avoid catastrophic activation of the viral fusion activity in acidic Golgi compartment prior to virion release. prM-E cleavage is inefficient, and many virions are only partially matured. These uncleaved prM would play a role in immune evasion. Its function is as follows. May play a role in virus budding. Exerts cytotoxic effects by activating a mitochondrial apoptotic pathway through M ectodomain. May display a viroporin activity. Binds to host cell surface receptor and mediates fusion between viral and cellular membranes. Envelope protein is synthesized in the endoplasmic reticulum in the form of heterodimer with protein prM. They play a role in virion budding in the ER, and the newly formed immature particle is covered with 60 spikes composed of heterodimer between precursor prM and envelope protein E. The virion is transported to the Golgi apparatus where the low pH causes dissociation of PrM-E heterodimers and formation of E homodimers. prM-E cleavage is inefficient, and many virions are only partially matured. These uncleaved prM would play a role in immune evasion. In terms of biological role, involved in immune evasion, pathogenesis and viral replication. Once cleaved off the polyprotein, is targeted to three destinations: the viral replication cycle, the plasma membrane and the extracellular compartment. Essential for viral replication. Required for formation of the replication complex and recruitment of other non-structural proteins to the ER-derived membrane structures. Excreted as a hexameric lipoparticle that plays a role against host immune response. Antagonizing the complement function. Binds to the host macrophages and dendritic cells. Inhibits signal transduction originating from Toll-like receptor 3 (TLR3). Functionally, component of the viral RNA replication complex that functions in virion assembly and antagonizes the host immune response. Its function is as follows. Required cofactor for the serine protease function of NS3. May have membrane-destabilizing activity and form viroporins. Displays three enzymatic activities: serine protease, NTPase and RNA helicase. NS3 serine protease, in association with NS2B, performs its autocleavage and cleaves the polyprotein at dibasic sites in the cytoplasm: C-prM, NS2A-NS2B, NS2B-NS3, NS3-NS4A, NS4A-2K and NS4B-NS5. NS3 RNA helicase binds RNA and unwinds dsRNA in the 3' to 5' direction. Also plays a role in virus assembly. In terms of biological role, regulates the ATPase activity of the NS3 helicase activity. NS4A allows NS3 helicase to conserve energy during unwinding. Functionally, functions as a signal peptide for NS4B and is required for the interferon antagonism activity of the latter. Its function is as follows. Induces the formation of ER-derived membrane vesicles where the viral replication takes place. Inhibits interferon (IFN)-induced host STAT1 phosphorylation and nuclear translocation, thereby preventing the establishment of cellular antiviral state by blocking the IFN-alpha/beta pathway. Replicates the viral (+) and (-) RNA genome, and performs the capping of genomes in the cytoplasm. NS5 methylates viral RNA cap at guanine N-7 and ribose 2'-O positions. Besides its role in RNA genome replication, also prevents the establishment of cellular antiviral state by blocking the interferon-alpha/beta (IFN-alpha/beta) signaling pathway. IFN-I induces binding of NS5 to host IFN-activated transcription factor STAT2, preventing its transcriptional activity. Host TRIM23 is the E3 ligase that interacts with and polyubiquitinates NS5 to promote its binding to STAT2 and trigger IFN-I signaling inhibition. The protein is Genome polyprotein of Edge Hill virus (EHV).